Consider the following 275-residue polypeptide: 2-dehydro-3-deoxyphosphooctonate aldolase (275 aa).

It belongs to the KdsA family.

Its subcellular location is the cytoplasm. It catalyses the reaction D-arabinose 5-phosphate + phosphoenolpyruvate + H2O = 3-deoxy-alpha-D-manno-2-octulosonate-8-phosphate + phosphate. Its pathway is carbohydrate biosynthesis; 3-deoxy-D-manno-octulosonate biosynthesis; 3-deoxy-D-manno-octulosonate from D-ribulose 5-phosphate: step 2/3. It participates in bacterial outer membrane biogenesis; lipopolysaccharide biosynthesis. This chain is 2-dehydro-3-deoxyphosphooctonate aldolase, found in Francisella tularensis subsp. novicida (strain U112).